The sequence spans 1365 residues: Serine-aspartate repeat-containing protein D (1365 aa).

The first 35 residues, 1–35, serve as a signal peptide directing secretion; the sequence is MLNRENKTAITRKGMVSNRLNKFSIRKYTVGTASI. A YSIRK-G/S signaling motif motif is present at residues 23 to 34; that stretch reads FSIRKYTVGTAS. The segment at 36-568 is ligand binding A region; that stretch reads LVGTTLIFGL…NNQSGGAGQE (533 aa). Residues 54–185 form a disordered region; it reads ESTNKELNEA…NKKVDAKTES (132 aa). 2 stretches are compositionally biased toward polar residues: residues 62-71 and 94-109; these read EATTSASDNQ and EMVS…NGNK. Basic and acidic residues predominate over residues 130–145; that stretch reads KSDEQASPKSTNEDLN. Composition is skewed to polar residues over residues 146-155 and 163-173; these read TKQTISNQEA and NKSVVNAQPTN. Basic and acidic residues predominate over residues 174-183; that stretch reads EENKKVDAKT. 5 consecutive CNA-B domains span residues 569-680, 681-791, 792-901, 902-1012, and 1013-1123; these read VYKI…IYKP, KYNL…YKTP, KYNL…FYKP, TYNL…YKTP, and KYSL…EEDT. Disordered regions lie at residues 857 to 884, 972 to 991, and 1078 to 1341; these read ETPS…STTG, YTPT…NGLT, and EKPA…SNNA. Composition is skewed to polar residues over residues 860–869 and 972–981; these read SGYTPTQVGS and YTPTSVTSGN. Acidic residues-rich tracts occupy residues 1091-1101 and 1118-1304; these read TEDDKDADGGE and YFEE…DSDS. The short motif at 1328-1332 is the LPXTG sorting signal element; it reads LPETG. Position 1331 is a pentaglycyl murein peptidoglycan amidated threonine (Thr1331). The propeptide at 1332–1365 is removed by sortase; sequence GNENSGSNNATLFGGLFAALGSLLLFGRRKKQNK.

The protein belongs to the serine-aspartate repeat-containing protein (SDr) family. In terms of assembly, interacts with host DSG1; this interaction increases S.aureus adherence to keratinocytes.

The protein localises to the secreted. It localises to the cell wall. Its function is as follows. Cell surface-associated calcium-binding protein which plays an important role in adhesion and pathogenesis. Mediates interactions with components of the extracellular matrix such as host DSG1 to promote bacterial adhesion to host cells. Contributes to the resistance to killing by innate immune components such as neutrophils present in blood and thus attenuates bacterial clearance. The polypeptide is Serine-aspartate repeat-containing protein D (sdrD) (Staphylococcus aureus (strain MSSA476)).